The following is a 116-amino-acid chain: U16-barytoxin-Tl1f (116 aa).

A signal peptide spans 1–20 (MKTIIVFLSLLVLATKFGDA). A propeptide spanning residues 21 to 74 (NEGVNQEQMKEVIQNEFREDFLNEMAPMSLLQQLEAIESTLLEKEADRNSRQKR) is cleaved from the precursor. 3 cysteine pairs are disulfide-bonded: Cys75-Cys90, Cys82-Cys95, and Cys89-Cys110. Asn85 is a glycosylation site (N-linked (GlcNAc...) asparagine).

This sequence belongs to the neurotoxin 14 (magi-1) family. 06 (ICK-Trit) subfamily. Expressed by the venom gland.

It is found in the secreted. In terms of biological role, ion channel inhibitor. This chain is U16-barytoxin-Tl1f, found in Trittame loki (Brush-footed trapdoor spider).